The sequence spans 259 residues: MRITQGERESSGEFLMSREFYGVLIGVTTLLVIFLPKSLFLLVILFLCFAISREVSVALGENEVFYFSPLVLLTYYFADPLVFPLIGLLSLYFAYKRWELNSFFKSTFLLFYPALFLVYLIKIKEISTYYLLIFIFGIWINDVFAYYIGKNFGKTPLFPKISPKKTVEGFLGGVLFGSLFFALTLPYGILNSFLLGTFVLTVGVAGDYFKSFIKRQVGIKDFSNVFGEHGGFTDRFDALVFSAPVFYLIMCAGELNCKL.

Helical transmembrane passes span 31–51 (LVIF…CFAI), 69–89 (PLVL…IGLL), 103–123 (FFKS…LIKI), 129–149 (YYLL…YYIG), 170–190 (FLGG…YGIL), 193–213 (FLLG…KSFI), and 236–256 (FDAL…GELN).

The protein belongs to the CDS family.

Its subcellular location is the cell membrane. It catalyses the reaction a 1,2-diacyl-sn-glycero-3-phosphate + CTP + H(+) = a CDP-1,2-diacyl-sn-glycerol + diphosphate. Its pathway is phospholipid metabolism; CDP-diacylglycerol biosynthesis; CDP-diacylglycerol from sn-glycerol 3-phosphate: step 3/3. The sequence is that of Phosphatidate cytidylyltransferase (cdsA) from Aquifex aeolicus (strain VF5).